Here is a 540-residue protein sequence, read N- to C-terminus: Testis-specific chromodomain protein Y 1 (540 aa).

Positions 6–66 (FEVEAIVDKR…RQTEKQKKLT (61 aa)) constitute a Chromo domain. A disordered region spans residues 76-106 (NNARRRTSRSTKANYSKNSPKTPVTDKHHRS). The span at 87 to 97 (KANYSKNSPKT) shows a compositional bias: polar residues.

In terms of assembly, interacts (via chromo domain) with histone H3K9me3. In terms of tissue distribution, testis-specific. Detected in spermatids (at protein level).

Its subcellular location is the nucleus. It carries out the reaction L-lysyl-[protein] + acetyl-CoA = N(6)-acetyl-L-lysyl-[protein] + CoA + H(+). Functionally, has histone acetyltransferase activity, with a preference for histone H4. In Homo sapiens (Human), this protein is Testis-specific chromodomain protein Y 1 (CDY1).